Here is a 199-residue protein sequence, read N- to C-terminus: Acireductone dioxygenase 1 (199 aa).

Fe(2+)-binding residues include histidine 99, histidine 101, glutamate 105, and histidine 144. The Ni(2+) site is built by histidine 99, histidine 101, glutamate 105, and histidine 144.

This sequence belongs to the acireductone dioxygenase (ARD) family. Requires Fe(2+) as cofactor. Ni(2+) serves as cofactor.

The protein resides in the cytoplasm. Its subcellular location is the nucleus. The catalysed reaction is 1,2-dihydroxy-5-(methylsulfanyl)pent-1-en-3-one + O2 = 4-methylsulfanyl-2-oxobutanoate + formate + 2 H(+). The enzyme catalyses 1,2-dihydroxy-5-(methylsulfanyl)pent-1-en-3-one + O2 = 3-(methylsulfanyl)propanoate + CO + formate + 2 H(+). It participates in amino-acid biosynthesis; L-methionine biosynthesis via salvage pathway; L-methionine from S-methyl-5-thio-alpha-D-ribose 1-phosphate: step 5/6. Its function is as follows. Catalyzes 2 different reactions between oxygen and the acireductone 1,2-dihydroxy-3-keto-5-methylthiopentene (DHK-MTPene) depending upon the metal bound in the active site. Fe-containing acireductone dioxygenase (Fe-ARD) produces formate and 2-keto-4-methylthiobutyrate (KMTB), the alpha-ketoacid precursor of methionine in the methionine recycle pathway. Ni-containing acireductone dioxygenase (Ni-ARD) produces methylthiopropionate, carbon monoxide and formate, and does not lie on the methionine recycle pathway. This Arabidopsis thaliana (Mouse-ear cress) protein is Acireductone dioxygenase 1 (ARD1).